Reading from the N-terminus, the 91-residue chain is Small ribosomal subunit protein uS19 (91 aa).

Belongs to the universal ribosomal protein uS19 family.

Its function is as follows. Protein S19 forms a complex with S13 that binds strongly to the 16S ribosomal RNA. The chain is Small ribosomal subunit protein uS19 from Pseudomonas fluorescens (strain Pf0-1).